A 501-amino-acid polypeptide reads, in one-letter code: Glycerol kinase (501 aa).

Residue Thr-17 coordinates ADP. Residues Thr-17, Thr-18, and Ser-19 each contribute to the ATP site. Thr-17 is a sn-glycerol 3-phosphate binding site. Arg-21 lines the ADP pocket. The sn-glycerol 3-phosphate site is built by Arg-87, Glu-88, Tyr-139, and Asp-243. 5 residues coordinate glycerol: Arg-87, Glu-88, Tyr-139, Asp-243, and Gln-244. The ADP site is built by Thr-265 and Gly-308. ATP-binding residues include Thr-265, Gly-308, Gln-312, and Gly-409. Gly-409 and Asn-413 together coordinate ADP.

It belongs to the FGGY kinase family.

The catalysed reaction is glycerol + ATP = sn-glycerol 3-phosphate + ADP + H(+). It participates in polyol metabolism; glycerol degradation via glycerol kinase pathway; sn-glycerol 3-phosphate from glycerol: step 1/1. Inhibited by fructose 1,6-bisphosphate (FBP). In terms of biological role, key enzyme in the regulation of glycerol uptake and metabolism. Catalyzes the phosphorylation of glycerol to yield sn-glycerol 3-phosphate. This is Glycerol kinase from Pseudomonas syringae pv. syringae (strain B728a).